The sequence spans 333 residues: Galactinol synthase 1 (333 aa).

Residue Lys-104 is part of the active site. Positions 120, 122, and 257 each coordinate Mn(2+).

It belongs to the glycosyltransferase 8 family. Galactosyltransferase subfamily. Requires a divalent metal cation as cofactor. Expressed in source leaves, specifically in the mesophyll.

The protein localises to the cytoplasm. It carries out the reaction myo-inositol + UDP-alpha-D-galactose = alpha-D-galactosyl-(1-&gt;3)-1D-myo-inositol + UDP + H(+). Functionally, major galactinol synthase mainly involved in the biosynthesis of storage raffinose family oligosaccharides (RFOs) that function as osmoprotectants. May promote plant stress tolerance. The protein is Galactinol synthase 1 (GOLS1) of Ajuga reptans (Bugle).